A 318-amino-acid chain; its full sequence is Retinol dehydrogenase 5 (318 aa).

The chain crosses the membrane as a helical span at residues methionine 1–serine 23. Over leucine 24 to lysine 288 the chain is Lumenal. Position 32-56 (phenylalanine 32–leucine 56) interacts with NADP(+). Serine 163 serves as a coordination point for substrate. The active-site Proton acceptor is tyrosine 175. The helical transmembrane segment at leucine 289–isoleucine 309 threads the bilayer. Residues leucine 310 to serine 318 lie on the Cytoplasmic side of the membrane.

It belongs to the short-chain dehydrogenases/reductases (SDR) family. In terms of assembly, homodimer. Expressed in eye, liver, kidney, brain, intestine, placenta, epididymus and submaxillary gland. In eye, strongly expressed in the retinal pigment epithelium, with lower expression levels detected in the inner segment of the photoreceptor cells and in the outer plexiform layer. In kidney, strong expression detected in the distal tubules and the transitional epithelium in the renal pelvis, with weaker expression detected in the epithelium of the outer stripe of the outer zone of the medulla. In liver, detected in hepatocytes in the centrilobular area. In lung, present in club cells in the epithelium of the bronchiole, in parenchyma and in cartilage surrounding the secondary bronchi. In skin, expressed in epidermis, hair follicles and mast cells in the dermis. Expressed in heart. Not detected in heart. Not detected in lung, spleen, skeletal muscle and testis.

Its subcellular location is the endoplasmic reticulum membrane. The enzyme catalyses 11-cis-retinol + NAD(+) = 11-cis-retinal + NADH + H(+). It carries out the reaction 9-cis-retinol + NAD(+) = 9-cis-retinal + NADH + H(+). The catalysed reaction is 13-cis-retinol + NAD(+) = 13-cis-retinal + NADH + H(+). It catalyses the reaction androsterone + NAD(+) = 5alpha-androstan-3,17-dione + NADH + H(+). The enzyme catalyses 5alpha-androstane-3alpha,17beta-diol + NAD(+) = 17beta-hydroxy-5alpha-androstan-3-one + NADH + H(+). The protein operates within cofactor metabolism; retinol metabolism. Its activity is regulated as follows. Inhibited by 9-cis-, 13-cis- and all-trans-retinoic acids, with the most potent inhibitor being 13-cis-retinoic acid. Weakly inhibited by oleic acid. Its function is as follows. Catalyzes the oxidation of cis-isomers of retinol, including 11-cis-, 9-cis-, and 13-cis-retinol in an NAD-dependent manner. Has no activity towards all-trans retinal. Plays a significant role in 11-cis retinol oxidation in the retinal pigment epithelium cells (RPE). Also recognizes steroids (androsterone, androstanediol) as its substrates. This Mus musculus (Mouse) protein is Retinol dehydrogenase 5.